Reading from the N-terminus, the 476-residue chain is Sedoheptulokinase (476 aa).

The protein belongs to the FGGY kinase family.

The protein resides in the cytoplasm. The catalysed reaction is sedoheptulose + ATP = D-sedoheptulose 7-phosphate + ADP + H(+). In terms of biological role, acts as a modulator of macrophage activation through control of glucose metabolism. The polypeptide is Sedoheptulokinase (Shpk) (Mus musculus (Mouse)).